Here is a 1368-residue protein sequence, read N- to C-terminus: DNA-directed RNA polymerase subunit beta (1368 aa).

Belongs to the RNA polymerase beta chain family. The RNAP catalytic core consists of 2 alpha, 1 beta, 1 beta' and 1 omega subunit. When a sigma factor is associated with the core the holoenzyme is formed, which can initiate transcription.

The catalysed reaction is RNA(n) + a ribonucleoside 5'-triphosphate = RNA(n+1) + diphosphate. Functionally, DNA-dependent RNA polymerase catalyzes the transcription of DNA into RNA using the four ribonucleoside triphosphates as substrates. This Legionella pneumophila (strain Paris) protein is DNA-directed RNA polymerase subunit beta.